The chain runs to 301 residues: ADP,ATP carrier protein 1 (301 aa).

3 Solcar repeats span residues 8–100 (YGFA…YKQV), 113–203 (RYFL…AKGM), and 210–299 (TSIF…VKAL). A run of 5 helical transmembrane segments spans residues 10 to 39 (FAKD…LLLQ), 77 to 101 (LANV…KQVF), 112 to 132 (WRYF…SLCF), 181 to 201 (VSVQ…DTAK), and 213 to 233 (FVSW…SYPF). Arg-82 and Lys-94 together coordinate ADP. Arg-237 serves as a coordination point for ADP. The tract at residues 237 to 242 (RRRMMM) is important for transport activity. Positions 237-242 (RRRMMM) match the Nucleotide carrier signature motif motif. The helical transmembrane segment at 276 to 293 (AFSNVLRGTGGALVLVFY) threads the bilayer.

Belongs to the mitochondrial carrier (TC 2.A.29) family. In terms of assembly, monomer.

Its subcellular location is the mitochondrion inner membrane. The enzyme catalyses ADP(in) + ATP(out) = ADP(out) + ATP(in). With respect to regulation, the matrix-open state (m-state) is inhibited by the membrane-permeable bongkrekic acid (BKA). The cytoplasmic-open state (c-state) is inhibited by the membrane-impermeable toxic inhibitor carboxyatractyloside (CATR). Its function is as follows. ADP:ATP antiporter that mediates import of ADP into the mitochondrial matrix for ATP synthesis, and export of ATP out to fuel the cell. Cycles between the cytoplasmic-open state (c-state) and the matrix-open state (m-state): operates by the alternating access mechanism with a single substrate-binding site intermittently exposed to either the cytosolic (c-state) or matrix (m-state) side of the inner mitochondrial membrane. This Anopheles gambiae (African malaria mosquito) protein is ADP,ATP carrier protein 1.